The following is a 492-amino-acid chain: Beta-Ala-His dipeptidase (492 aa).

His107 is a Zn(2+) binding site. Asp109 is a catalytic residue. Asp140 serves as a coordination point for Zn(2+). Glu174 acts as the Proton acceptor in catalysis. Residue Glu175 coordinates Zn(2+). Residue Ser194 is modified to Phosphoserine. Residues Asp203 and His453 each coordinate Zn(2+).

Belongs to the peptidase M20A family. As to quaternary structure, homodimer. It depends on Zn(2+) as a cofactor. As to expression, detected exclusively in kidney.

Its subcellular location is the secreted. The catalysed reaction is Preferential hydrolysis of the beta-Ala-|-His dipeptide (carnosine), and also anserine, Xaa-|-His dipeptides and other dipeptides including homocarnosine.. It catalyses the reaction carnosine + H2O = beta-alanine + L-histidine. It carries out the reaction anserine + H2O = N(pros)-methyl-L-histidine + beta-alanine. The enzyme catalyses L-alanyl-L-histidine + H2O = L-histidine + L-alanine. The catalysed reaction is glycyl-L-histidine + H2O = L-histidine + glycine. It catalyses the reaction L-homocarnosine + H2O = 4-aminobutanoate + L-histidine. Its function is as follows. Catalyzes the peptide bond hydrolysis in Xaa-His dipeptides, displaying the highest activity toward carnosine (beta-alanyl-L-histidine) and anserine (beta-alanyl-3-methyl-histidine). In Rattus norvegicus (Rat), this protein is Beta-Ala-His dipeptidase (Cndp1).